Consider the following 155-residue polypeptide: SsrA-binding protein (155 aa).

This sequence belongs to the SmpB family.

The protein localises to the cytoplasm. In terms of biological role, required for rescue of stalled ribosomes mediated by trans-translation. Binds to transfer-messenger RNA (tmRNA), required for stable association of tmRNA with ribosomes. tmRNA and SmpB together mimic tRNA shape, replacing the anticodon stem-loop with SmpB. tmRNA is encoded by the ssrA gene; the 2 termini fold to resemble tRNA(Ala) and it encodes a 'tag peptide', a short internal open reading frame. During trans-translation Ala-aminoacylated tmRNA acts like a tRNA, entering the A-site of stalled ribosomes, displacing the stalled mRNA. The ribosome then switches to translate the ORF on the tmRNA; the nascent peptide is terminated with the 'tag peptide' encoded by the tmRNA and targeted for degradation. The ribosome is freed to recommence translation, which seems to be the essential function of trans-translation. In Streptococcus equi subsp. zooepidemicus (strain H70), this protein is SsrA-binding protein.